We begin with the raw amino-acid sequence, 160 residues long: Transcription elongation factor GreA (160 aa).

It belongs to the GreA/GreB family.

In terms of biological role, necessary for efficient RNA polymerase transcription elongation past template-encoded arresting sites. The arresting sites in DNA have the property of trapping a certain fraction of elongating RNA polymerases that pass through, resulting in locked ternary complexes. Cleavage of the nascent transcript by cleavage factors such as GreA or GreB allows the resumption of elongation from the new 3'terminus. GreA releases sequences of 2 to 3 nucleotides. This chain is Transcription elongation factor GreA, found in Francisella tularensis subsp. tularensis (strain FSC 198).